The chain runs to 103 residues: Large ribosomal subunit protein bL21 (103 aa).

This sequence belongs to the bacterial ribosomal protein bL21 family. As to quaternary structure, part of the 50S ribosomal subunit. Contacts protein L20.

Its function is as follows. This protein binds to 23S rRNA in the presence of protein L20. The sequence is that of Large ribosomal subunit protein bL21 from Pseudomonas syringae pv. syringae (strain B728a).